A 749-amino-acid polypeptide reads, in one-letter code: uncharacterized protein (749 aa).

In terms of domain architecture, Helicase ATP-binding spans 63–243; the sequence is FQYVQKGESI…QLTGKPMRLV (181 aa). ATP is bound at residue 76 to 83; it reads TPTASGKT. The short motif at 185–188 is the DEVH box element; that stretch reads DELH. One can recognise a Helicase C-terminal domain in the interval 276–430; the sequence is EVNELAKEFL…SARINPENLI (155 aa).

The protein belongs to the helicase family.

This is an uncharacterized protein from Bacillus subtilis (strain 168).